Consider the following 799-residue polypeptide: LPS-assembly protein LptD (799 aa).

An N-terminal signal peptide occupies residues 1-34 (MMHELDLRPHLARFAQRPLALLAWALLQGTSVNA).

This sequence belongs to the LptD family. In terms of assembly, component of the lipopolysaccharide transport and assembly complex. Interacts with LptE and LptA.

The protein localises to the cell outer membrane. Functionally, together with LptE, is involved in the assembly of lipopolysaccharide (LPS) at the surface of the outer membrane. The protein is LPS-assembly protein LptD of Albidiferax ferrireducens (strain ATCC BAA-621 / DSM 15236 / T118) (Rhodoferax ferrireducens).